We begin with the raw amino-acid sequence, 638 residues long: Neuroendocrine convertase 2 (638 aa).

Residues Met1–Ala25 form the signal peptide. A propeptide spanning residues Glu26–Arg109 is cleaved from the precursor. One can recognise a Peptidase S8 domain in the interval Gln129–Val453. Active-site charge relay system residues include Asp167 and His208. Cystine bridges form between Cys225–Cys376 and Cys317–Cys347. Asn375 carries an N-linked (GlcNAc...) asparagine glycan. Catalysis depends on Ser384, which acts as the Charge relay system. The P/Homo B domain maps to Thr461 to Ala597. The cysteines at positions 468 and 494 are disulfide-linked. N-linked (GlcNAc...) asparagine glycans are attached at residues Asn514 and Asn524.

The protein belongs to the peptidase S8 family. Furin subfamily.

The protein localises to the cytoplasmic vesicle. The protein resides in the secretory vesicle. Its subcellular location is the secreted. The enzyme catalyses Release of protein hormones and neuropeptides from their precursors, generally by hydrolysis of -Lys-Arg-|- bonds.. Functionally, serine endopeptidase which is involved in the processing of hormone and other protein precursors at sites comprised of pairs of basic amino acid residues. Responsible for the release of glucagon from proglucagon in pancreatic A cells. This chain is Neuroendocrine convertase 2 (PCSK2), found in Sus scrofa (Pig).